A 187-amino-acid polypeptide reads, in one-letter code: CASP-like protein 2C1 (187 aa).

At 1–14 the chain is on the cytoplasmic side; sequence MVAAARVVSGVKAE. A helical transmembrane segment spans residues 15–35; that stretch reads GLLRGACAALAAAAALLLGLS. The Extracellular segment spans residues 36 to 54; it reads TQTETVLLVRKKGTVKDVQ. Residues 55 to 75 traverse the membrane as a helical segment; the sequence is ALWVLAMAAASAAGYHLLQLL. Over 76-97 the chain is Cytoplasmic; sequence KCLYLGRGGGRALAWTCLLLDK. A helical transmembrane segment spans residues 98–118; it reads ACAYATFATTVAAAQACVVAL. Residues 119–139 are Extracellular-facing; that stretch reads DGAHALQWTKLCNIYTRFCEQ. The chain crosses the membrane as a helical span at residues 140–160; it reads VAGSLVLGMLAAVGTAVLSAA. Over 161 to 187 the chain is Cytoplasmic; the sequence is SARNVFRHYYCSSHSPPAPPPETCDAH.

It belongs to the Casparian strip membrane proteins (CASP) family. Homodimer and heterodimers.

The protein resides in the cell membrane. The chain is CASP-like protein 2C1 from Zea mays (Maize).